Consider the following 359-residue polypeptide: tRNA-specific 2-thiouridylase MnmA (359 aa).

ATP-binding positions include 7–14 (AMSGGVDS) and Met33. Cys101 serves as the catalytic Nucleophile. A disulfide bridge links Cys101 with Cys198. Position 125 (Gly125) interacts with ATP. The segment at 148 to 150 (KDQ) is interaction with tRNA. Residue Cys198 is the Cysteine persulfide intermediate of the active site.

It belongs to the MnmA/TRMU family.

It localises to the cytoplasm. It catalyses the reaction S-sulfanyl-L-cysteinyl-[protein] + uridine(34) in tRNA + AH2 + ATP = 2-thiouridine(34) in tRNA + L-cysteinyl-[protein] + A + AMP + diphosphate + H(+). Functionally, catalyzes the 2-thiolation of uridine at the wobble position (U34) of tRNA, leading to the formation of s(2)U34. The protein is tRNA-specific 2-thiouridylase MnmA of Chloroflexus aggregans (strain MD-66 / DSM 9485).